A 211-amino-acid chain; its full sequence is Ubiquitin-conjugating enzyme E2 S-B (211 aa).

The UBC core domain maps to 11–157 (HIIRRVYKEV…ARLMTDIHAQ (147 aa)). The active-site Glycyl thioester intermediate is the Cys95. The interval 158 to 211 (GTSLRGKDPTDPCSSASTPVVSGDGPMAKKHAGDRDKKLAAKKKTDKKRALRRL) is disordered. Positions 197–211 (AAKKKTDKKRALRRL) are enriched in basic residues.

This sequence belongs to the ubiquitin-conjugating enzyme family.

The enzyme catalyses S-ubiquitinyl-[E1 ubiquitin-activating enzyme]-L-cysteine + [E2 ubiquitin-conjugating enzyme]-L-cysteine = [E1 ubiquitin-activating enzyme]-L-cysteine + S-ubiquitinyl-[E2 ubiquitin-conjugating enzyme]-L-cysteine.. It participates in protein modification; protein ubiquitination. Catalyzes the covalent attachment of ubiquitin to other proteins. Acts as an essential factor of the anaphase promoting complex/cyclosome (APC/C), a cell cycle-regulated ubiquitin ligase that controls progression through mitosis. Acts by specifically elongating 'Lys-11'-linked polyubiquitin chains initiated by the E2 enzyme ube2c/ubch10 on APC/C substrates, enhancing the degradation of APC/C substrates by the proteasome and promoting mitotic exit. This Xenopus laevis (African clawed frog) protein is Ubiquitin-conjugating enzyme E2 S-B (ube2s-b).